The primary structure comprises 141 residues: Nucleoside diphosphate kinase (141 aa).

ATP contacts are provided by K11, F59, R87, T93, R104, and N114. H117 functions as the Pros-phosphohistidine intermediate in the catalytic mechanism.

This sequence belongs to the NDK family. Homotetramer. Mg(2+) is required as a cofactor.

The protein resides in the cytoplasm. It catalyses the reaction a 2'-deoxyribonucleoside 5'-diphosphate + ATP = a 2'-deoxyribonucleoside 5'-triphosphate + ADP. The catalysed reaction is a ribonucleoside 5'-diphosphate + ATP = a ribonucleoside 5'-triphosphate + ADP. In terms of biological role, major role in the synthesis of nucleoside triphosphates other than ATP. The ATP gamma phosphate is transferred to the NDP beta phosphate via a ping-pong mechanism, using a phosphorylated active-site intermediate. The polypeptide is Nucleoside diphosphate kinase (Herminiimonas arsenicoxydans).